A 166-amino-acid chain; its full sequence is MAFVTTAEVCDANQEMIRSGQLRALQPVFQIYGRRQIFSGPVVTVKVFEDNGLIRHFLEEKGNGRVLVVDGGGSLRCAILGGNPVVQAQNNGWAGIIVNGCIRDVDEINGCDIGVRALASHPIKASKKGLGEQRVSLNIAGTRICDGEWLYADTDGILVSQIELSV.

The residue at position 2 (A2) is an N-acetylalanine. Residues 81–84 (GGNP) and R103 each bind substrate. D104 is an a divalent metal cation binding site.

Belongs to the class II aldolase/RraA-like family. As to quaternary structure, homotrimer. It depends on a divalent metal cation as a cofactor.

The catalysed reaction is 4-hydroxy-4-methyl-2-oxoglutarate = 2 pyruvate. The enzyme catalyses oxaloacetate + H(+) = pyruvate + CO2. In terms of biological role, catalyzes the aldol cleavage of 4-hydroxy-4-methyl-2-oxoglutarate (HMG) into 2 molecules of pyruvate. Also contains a secondary oxaloacetate (OAA) decarboxylase activity due to the common pyruvate enolate transition state formed following C-C bond cleavage in the retro-aldol and decarboxylation reactions. In Arabidopsis thaliana (Mouse-ear cress), this protein is Putative 4-hydroxy-4-methyl-2-oxoglutarate aldolase 1.